The primary structure comprises 587 residues: Sedolisin (587 aa).

Residues 1–32 (MKSSAAKQTVLCLNRYAVVALPLAIASFAAFG) form the signal peptide. Positions 33-215 (ASPASTLWAP…VGERSAAKTL (183 aa)) are cleaved as a propeptide — removed in mature form. The 365-residue stretch at 219–583 (TAKGHNPTEF…AKLSAYIRSN (365 aa)) folds into the Peptidase S53 domain. Positions 276–295 (TIQTGSSNGDYSDDQQGQGE) are disordered. Active-site charge relay system residues include E295 and D299. C352 and C391 form a disulfide bridge. S502 functions as the Charge relay system in the catalytic mechanism. Positions 543, 544, 559, 561, and 563 each coordinate Ca(2+). A propeptide spans 586 to 587 (GH) (removed in mature form).

Requires Ca(2+) as cofactor. Post-translationally, autocatalytically processed.

The protein resides in the periplasm. The enzyme catalyses Hydrolysis of the B chain of insulin at 13-Glu-|-Ala-14, 15-Leu-|-Tyr-16 and 25-Phe-|-Tyr-26 and angiotensin I at 4-Tyr-|-Ile-5. A good synthetic substrate is Lys-Pro-Ile-Glu-Phe-|-Phe(NO2)-Arg-Leu.. Its activity is regulated as follows. Inhibited by 1,2-epoxy-3-(p-nitrophenoxy)propane (EPNP), but not by carboxyl proteinase inhibitors, such as pepstatin, pepstatin Ac (S-PI) and diazoacetyl-DL-norleucine methyl ester (DAN). Inhibited by tyrostatin, pseudo-tyrostatin, AcIPF, AcIAF, chymostatin and pseudo-iodotyrostatin. In terms of biological role, pepstatin-insensitive serine-carboxyl proteinase. In vitro can hydrolyze various synthetic peptides. Also shows activity on acid-denatured hemoglobin and on casein. The polypeptide is Sedolisin (pcp) (Pseudomonas sp. (strain 101) (Achromobacter parvulus T1)).